The following is a 230-amino-acid chain: Isoprenyl transferase (230 aa).

D14 is an active-site residue. Residue D14 participates in Mg(2+) binding. Substrate-binding positions include 15 to 18 (GNGR), W19, R27, H31, and 59 to 61 (STE). The Proton acceptor role is filled by N62. Substrate is bound by residues W63, R65, R175, and 181 to 183 (RIS). Residue E194 participates in Mg(2+) binding.

Belongs to the UPP synthase family. Homodimer. It depends on Mg(2+) as a cofactor.

In terms of biological role, catalyzes the condensation of isopentenyl diphosphate (IPP) with allylic pyrophosphates generating different type of terpenoids. This Fusobacterium nucleatum subsp. nucleatum (strain ATCC 25586 / DSM 15643 / BCRC 10681 / CIP 101130 / JCM 8532 / KCTC 2640 / LMG 13131 / VPI 4355) protein is Isoprenyl transferase.